Reading from the N-terminus, the 382-residue chain is Protein-arginine rhamnosyltransferase (382 aa).

DTDP-beta-L-rhamnose-binding positions include 17–20 (NFGD), Y187, Q252, and 268–272 (RGEDS). D20 serves as the catalytic Proton acceptor. E270 is a catalytic residue.

The protein belongs to the glycosyltransferase 104 family.

It catalyses the reaction dTDP-beta-L-rhamnose + L-arginyl-[protein] = N(omega)-(alpha-L-rhamnosyl)-L-arginyl-[protein] + dTDP + H(+). In terms of biological role, protein-arginine rhamnosyltransferase that catalyzes the transfer of a single rhamnose to elongation factor P (EF-P) on 'Lys-32', a modification required for EF-P-dependent rescue of polyproline stalled ribosomes. This Neisseria meningitidis protein is Protein-arginine rhamnosyltransferase.